A 141-amino-acid polypeptide reads, in one-letter code: MFFGEFEHALDAKGRLIIPAKFRELLGTSFVITRGMDGCIFGYPAERWATLQAQLDDLPLTRKDARAFVRFFYAAAAECELDKQGRVMIPATLRQYAKLEKQCVIVGVSDRFEIWGAEHWQQFETETAANFDDLAENLIDF.

SpoVT-AbrB domains are found at residues 5–47 and 76–119; these read EFEH…PAER and AAEC…GAEH.

It belongs to the MraZ family. As to quaternary structure, forms oligomers.

It is found in the cytoplasm. It localises to the nucleoid. In Lactiplantibacillus plantarum (strain ATCC BAA-793 / NCIMB 8826 / WCFS1) (Lactobacillus plantarum), this protein is Transcriptional regulator MraZ.